Here is a 173-residue protein sequence, read N- to C-terminus: Calcineurin subunit B (173 aa).

EF-hand domains lie at 20–55 (DEID…AANP), 59–87 (RLMD…FSTK), 89–124 (NKKE…MVGN), and 130–165 (QLQQ…TNVY). Ca(2+) is bound by residues Asp-33, Asp-35, Ser-37, Glu-44, Asp-65, Asn-67, Ser-69, Asp-71, Glu-76, Asp-102, Asp-104, Asp-106, Tyr-108, Glu-113, Asp-143, Asp-145, Asp-147, Lys-149, and Glu-154.

It belongs to the calcineurin regulatory subunit family. In terms of assembly, composed of a catalytic subunit (A) and a regulatory subunit (B).

Regulatory subunit of calcineurin, a calcium-dependent, calmodulin stimulated protein phosphatase. Confers calcium sensitivity. The protein is Calcineurin subunit B (CNB1) of Yarrowia lipolytica (strain CLIB 122 / E 150) (Yeast).